The primary structure comprises 218 residues: Dehydration-responsive element-binding protein 1B (218 aa).

Residues 1-26 (MEVEEAAYRTVWSEPPKRPAGRTKFR) form a disordered region. A DNA-binding region (AP2/ERF) is located at residues 32–95 (VYRGVRRRGG…RGRAACLNFA (64 aa)). The interval 131–151 (SAAPSSPAETFADDGDEEEDN) is disordered. Residues 141 to 151 (FADDGDEEEDN) show a composition bias toward acidic residues.

The protein belongs to the AP2/ERF transcription factor family. ERF subfamily.

The protein localises to the nucleus. Transcriptional activator that binds specifically to the DNA sequence 5'-[AG]CCGAC-3'. Binding to the C-repeat/DRE element mediates high salinity- and dehydration-inducible transcription. Confers resistance to high salt, cold and drought stress. The sequence is that of Dehydration-responsive element-binding protein 1B (DREB1B) from Oryza sativa subsp. indica (Rice).